The sequence spans 477 residues: Oleate hydroxylase FAH12 (477 aa).

The disordered stretch occupies residues 26–48; sequence YESSAAVSPAESPRTSASSTSLS. Over residues 27–48 the composition is skewed to low complexity; the sequence is ESSAAVSPAESPRTSASSTSLS. 2 consecutive transmembrane segments (helical) span residues 101-118 and 133-153; these read AYVL…YLFH and FVLW…LWVI. Positions 155-159 match the Histidine box-1 motif; it reads HECGH. Residues 167–187 traverse the membrane as a helical segment; that stretch reads FISDLTGWVIHSALLVPYFSW. Positions 191-195 match the Histidine box-2 motif; it reads HSAHH. 3 helical membrane passes run 234–254, 299–319, and 327–347; these read PIYT…SYLM, YIVL…YLGN, and AVWY…ITFL.

The protein belongs to the fatty acid desaturase type 1 family.

It is found in the microsome membrane. It carries out the reaction (9Z)-octadecenoate + AH2 + O2 = (12R)-hydroxy-(9Z)-octadecenoate + A + H2O. The protein operates within lipid metabolism; monounsaturated fatty acid biosynthesis. Functionally, oleate hydroxylase involved in the biosynthesis of ricinoleate (12-hydroxy-cis-9-octadecenoate), that is present at high levels in C.purpurea sclerotium tissue. Exhibits delta(12) hydroxylase activity on 16C and 18C monounsaturated fatty acids (i.e. oleic and palmitoleic acids), and, to a lower extent, gamma(3) hydroxylase activity on ricinoleate. The polypeptide is Oleate hydroxylase FAH12 (Claviceps purpurea (Ergot fungus)).